The following is a 311-amino-acid chain: Putative mitochondrial transporter UCP3 (311 aa).

Topologically, residues 1–10 (MVGLQPSERP) are mitochondrial intermembrane. A helical membrane pass occupies residues 11–32 (PTTSVKFLAAGTAACFADLLTF). 3 Solcar repeats span residues 11–105 (PTTS…VKQF), 114–205 (SSII…IKEK), and 214–299 (DNFP…MKRA). At 33 to 76 (PLDTAKVRLQIQGENQAALAARSAQYRGVLGTILTMVRTEGPRS) the chain is on the mitochondrial matrix side. The chain crosses the membrane as a helical span at residues 77-99 (LYSGLVAGLQRQMSFASIRIGLY). Residues 100–119 (DSVKQFYTPKGSDHSSIITR) are Mitochondrial intermembrane-facing. The helical transmembrane segment at 120 to 136 (ILAGCTTGAMAVTCAQP) threads the bilayer. At 137-182 (TDVVKIRFQASMHTGLGGNRKYSGTMDAYRTIAREEGVRGLWKGIL) the chain is on the mitochondrial matrix side. The helical transmembrane segment at 183 to 199 (PNITRNAIVNCGEMVTY) threads the bilayer. Residues 200–216 (DIIKEKLLDYHLLTDNF) are Mitochondrial intermembrane-facing. A helical transmembrane segment spans residues 217–236 (PCHFVSAFGAGFCATLVASP). Residues 237 to 270 (VDVVKTRYMNSPPGQYHSPFDCMLKMVTQEGPTA) lie on the Mitochondrial matrix side of the membrane. A helical membrane pass occupies residues 271–293 (FYKGFTPSFLRLGSWNVVMFVTY). Residues 278 to 300 (SFLRLGSWNVVMFVTYEQMKRAL) are purine nucleotide binding. The Mitochondrial intermembrane segment spans residues 294-311 (EQMKRALMKVQMLRDSPF).

This sequence belongs to the mitochondrial carrier (TC 2.A.29) family. As to quaternary structure, interacts with HAX1; the interaction is direct and calcium-dependent.

Its subcellular location is the mitochondrion inner membrane. Functionally, putative transmembrane transporter that plays a role in mitochondrial metabolism via an as yet unclear mechanism. Originally, this mitochondrial protein was thought to act as a proton transmembrane transporter from the mitochondrial intermembrane space into the matrix, causing proton leaks through the inner mitochondrial membrane, thereby uncoupling mitochondrial membrane potential generation from ATP synthesis. However, this function is controversial and uncoupling may not be the function, or at least not the main function, but rather a consequence of more conventional metabolite transporter activity. The sequence is that of Putative mitochondrial transporter UCP3 from Bos taurus (Bovine).